The sequence spans 132 residues: Phycocyanin PC645 alpha-1 subunit (132 aa).

Residues D54 and R68 each coordinate (2R,3E)-phycocyanobilin. Mesobiliverdin is bound by residues C70, Q76, Y77, and K92. Positions 123 and 125 each coordinate 15,16-dihydrobiliverdin.

It belongs to the phycoerythrin family. Heterotetramer of 2 different alpha chains and 2 identical beta chains which form 2 alpha-beta heterodimers within the heterotetramer. In terms of processing, contains two phycocyanobilin chromophores, one mesobiliverdin chromophore and one 15,16-dihydrobiliverdin chromophore with binding mediated by both the alpha and beta subunits.

The protein localises to the plastid. It localises to the chloroplast thylakoid membrane. Functionally, light-harvesting photosynthetic tetrapyrrole chromophore-protein from the phycobiliprotein complex. In Chroomonas sp. (strain CCMP270), this protein is Phycocyanin PC645 alpha-1 subunit.